The primary structure comprises 108 residues: DNA-directed RNA polymerase III subunit RPC10 (108 aa).

6 residues coordinate Zn(2+): C5, C8, C25, C28, C69, and C72. Residues 5–28 (CPGCGNGLIVEEGQRCHRFACNTC) form a C4-type zinc finger. A TFIIS-type zinc finger spans residues 65 to 107 (TAESCPKCEHPRAYFMQLQTRSADEPMTTFYKCCNAQCGHRWR). The short motif at 88 to 89 (DE) is the Hairpin element. Zn(2+)-binding residues include C98 and C102.

This sequence belongs to the archaeal RpoM/eukaryotic RPA12/RPB9/RPC11 RNA polymerase family. Component of the RNA polymerase III complex consisting of 17 subunits: a ten-subunit horseshoe-shaped catalytic core composed of POLR3A/RPC1, POLR3B/RPC2, POLR1C/RPAC1, POLR1D/RPAC2, POLR3K/RPC10, POLR2E/RPABC1, POLR2F/RPABC2, POLR2H/RPABC3, POLR2K/RPABC4 and POLR2L/RPABC5; a mobile stalk composed of two subunits POLR3H/RPC8 and CRCP/RPC9, protruding from the core and functioning primarily in transcription initiation; and additional subunits homologous to general transcription factors of the RNA polymerase II machinery, POLR3C/RPC3-POLR3F/RPC6-POLR3G/RPC7 heterotrimer required for transcription initiation and POLR3D/RPC4-POLR3E/RPC5 heterodimer involved in both transcription initiation and termination.

It localises to the nucleus. Functionally, core component of RNA polymerase III (Pol III) which synthesizes small non-coding RNAs using the four ribonucleoside triphosphates as substrates. Can mediate Pol I proofreading of the nascent RNA transcript. Anchors into the Pol III active site to constantly monitor transcription fidelity, cleaves mis-incorporated 5'-ribonucleotides and restarts the transcription process. Once Pol III reaches the poly(dT) termination signal, can induce Pol III clamp opening and transcription termination. Pol III plays an important role in sensing and limiting infection by intracellular bacteria and DNA viruses. Acts as a nuclear and cytosolic DNA sensor involved in innate immune response. Can sense non-self dsDNA that serves as template for transcription into dsRNA. The non-self RNA polymerase III transcripts, such as Epstein-Barr virus-encoded RNAs (EBERs) induce type I interferon and NF-kappa-B through the RIG-I pathway. This is DNA-directed RNA polymerase III subunit RPC10 from Homo sapiens (Human).